The chain runs to 446 residues: Exodeoxyribonuclease 7 large subunit (446 aa).

The protein belongs to the XseA family. In terms of assembly, heterooligomer composed of large and small subunits.

It is found in the cytoplasm. It carries out the reaction Exonucleolytic cleavage in either 5'- to 3'- or 3'- to 5'-direction to yield nucleoside 5'-phosphates.. Functionally, bidirectionally degrades single-stranded DNA into large acid-insoluble oligonucleotides, which are then degraded further into small acid-soluble oligonucleotides. This chain is Exodeoxyribonuclease 7 large subunit, found in Vibrio cholerae serotype O1 (strain ATCC 39541 / Classical Ogawa 395 / O395).